An 89-amino-acid polypeptide reads, in one-letter code: MAHKKAGGSSRNGRDSAGRRLGVKLYGGQSAIAGNIIVRQRGTKFWPGEGVGIGKDHTIFATANGNVTFHKGLKGRTFISVLPAAEAAE.

This sequence belongs to the bacterial ribosomal protein bL27 family.

The protein is Large ribosomal subunit protein bL27 of Ruegeria sp. (strain TM1040) (Silicibacter sp.).